The chain runs to 67 residues: Large ribosomal subunit protein uL29 (67 aa).

It belongs to the universal ribosomal protein uL29 family.

This Heliobacterium modesticaldum (strain ATCC 51547 / Ice1) protein is Large ribosomal subunit protein uL29.